The sequence spans 653 residues: Beta-galactosidase-1-like protein 3 (653 aa).

The active-site Proton donor is glutamate 227. Glutamate 301 serves as the catalytic Nucleophile.

This sequence belongs to the glycosyl hydrolase 35 family.

The protein is Beta-galactosidase-1-like protein 3 (GLB1L3) of Homo sapiens (Human).